The chain runs to 195 residues: Putative NADH dehydrogenase/NAD(P)H nitroreductase CC_0061 (195 aa).

This sequence belongs to the nitroreductase family. HadB/RutE subfamily. Requires FMN as cofactor.

The polypeptide is Putative NADH dehydrogenase/NAD(P)H nitroreductase CC_0061 (Caulobacter vibrioides (strain ATCC 19089 / CIP 103742 / CB 15) (Caulobacter crescentus)).